A 151-amino-acid polypeptide reads, in one-letter code: 3-hydroxyacyl-[acyl-carrier-protein] dehydratase FabZ (151 aa).

H54 is an active-site residue.

The protein belongs to the thioester dehydratase family. FabZ subfamily.

It is found in the cytoplasm. It catalyses the reaction a (3R)-hydroxyacyl-[ACP] = a (2E)-enoyl-[ACP] + H2O. In terms of biological role, involved in unsaturated fatty acids biosynthesis. Catalyzes the dehydration of short chain beta-hydroxyacyl-ACPs and long chain saturated and unsaturated beta-hydroxyacyl-ACPs. This Idiomarina loihiensis (strain ATCC BAA-735 / DSM 15497 / L2-TR) protein is 3-hydroxyacyl-[acyl-carrier-protein] dehydratase FabZ.